The following is a 334-amino-acid chain: Glyceraldehyde-3-phosphate dehydrogenase (334 aa).

Residues 12-13 (RI), Asp35, Arg79, and Ser121 each bind NAD(+). D-glyceraldehyde 3-phosphate is bound by residues 152–154 (SCT), Thr183, Arg198, 211–212 (TG), and Arg234. Cys153 functions as the Nucleophile in the catalytic mechanism. Residue Asn315 coordinates NAD(+).

Belongs to the glyceraldehyde-3-phosphate dehydrogenase family. Homotetramer.

It is found in the cytoplasm. The catalysed reaction is D-glyceraldehyde 3-phosphate + phosphate + NAD(+) = (2R)-3-phospho-glyceroyl phosphate + NADH + H(+). It participates in carbohydrate degradation; glycolysis; pyruvate from D-glyceraldehyde 3-phosphate: step 1/5. Functionally, catalyzes the oxidative phosphorylation of glyceraldehyde 3-phosphate (G3P) to 1,3-bisphosphoglycerate (BPG) using the cofactor NAD. The first reaction step involves the formation of a hemiacetal intermediate between G3P and a cysteine residue, and this hemiacetal intermediate is then oxidized to a thioester, with concomitant reduction of NAD to NADH. The reduced NADH is then exchanged with the second NAD, and the thioester is attacked by a nucleophilic inorganic phosphate to produce BPG. This is Glyceraldehyde-3-phosphate dehydrogenase (gap) from Corynebacterium glutamicum (strain ATCC 13032 / DSM 20300 / JCM 1318 / BCRC 11384 / CCUG 27702 / LMG 3730 / NBRC 12168 / NCIMB 10025 / NRRL B-2784 / 534).